Reading from the N-terminus, the 305-residue chain is Tyrosine recombinase XerC (305 aa).

In terms of domain architecture, Core-binding (CB) spans 4-95 (TSIQALINKW…AVKNFYRFLE (92 aa)). The Tyr recombinase domain maps to 116–298 (LLPKALSEDD…SIKHLEAVYT (183 aa)). Residues arginine 159, lysine 182, histidine 250, arginine 253, and histidine 276 contribute to the active site. Tyrosine 285 serves as the catalytic O-(3'-phospho-DNA)-tyrosine intermediate.

It belongs to the 'phage' integrase family. XerC subfamily. In terms of assembly, forms a cyclic heterotetrameric complex composed of two molecules of XerC and two molecules of XerD.

The protein resides in the cytoplasm. In terms of biological role, site-specific tyrosine recombinase, which acts by catalyzing the cutting and rejoining of the recombining DNA molecules. The XerC-XerD complex is essential to convert dimers of the bacterial chromosome into monomers to permit their segregation at cell division. It also contributes to the segregational stability of plasmids. The sequence is that of Tyrosine recombinase XerC from Rickettsia rickettsii (strain Iowa).